Here is a 562-residue protein sequence, read N- to C-terminus: Tryptophan 2-monooxygenase (562 aa).

The FMN site is built by serine 54, glutamate 74, arginine 76, arginine 82, and arginine 104. Arginine 104 lines the substrate pocket.

The protein belongs to the tryptophan 2-monooxygenase family. Requires FMN as cofactor.

It carries out the reaction L-tryptophan + O2 = indole-3-acetamide + CO2 + H2O. It participates in plant hormone metabolism; auxin biosynthesis. This chain is Tryptophan 2-monooxygenase (iaaM), found in Pantoea agglomerans pv. gypsophilae (Erwinia herbicola).